Consider the following 380-residue polypeptide: TPR repeat-containing thioredoxin TDX (380 aa).

The residue at position 2 (valine 2) is an N-acetylvaline. The segment covering threonine 49 to threonine 59 has biased composition (basic and acidic residues). Positions threonine 49–glutamate 115 are disordered. Positions aspartate 69–asparagine 91 are enriched in acidic residues. The segment covering aspartate 106–glutamate 115 has biased composition (basic and acidic residues). TPR repeat units lie at residues alanine 112–serine 145, isoleucine 147–serine 179, and lysine 181–glutamate 213. Residues arginine 240–alanine 263 show a composition bias toward basic and acidic residues. Residues arginine 240–alanine 265 form a disordered region. The 127-residue stretch at arginine 252–serine 378 folds into the Thioredoxin domain. Residues cysteine 304 and cysteine 307 each act as nucleophile in the active site. Cysteine 304 and cysteine 307 are joined by a disulfide.

The protein belongs to the thioredoxin family. Oligomerization under high temperature.

Its function is as follows. Thiol-disulfide oxidoreductase that possesses insulin disulfide bonds reducing activity, disulfide reductase, foldase chaperone and holdase chaperone activities. Heat shock causes oligomerization and formation of high molecular weiht (HMW) complexes with concomitant functional switching from a disulfide reductase and foldase chaperone to a holdase chaperone. May interact with HSP70 proteins through the TPR repeats. This Arabidopsis thaliana (Mouse-ear cress) protein is TPR repeat-containing thioredoxin TDX (TDX).